Reading from the N-terminus, the 380-residue chain is Cytochrome b (380 aa).

4 consecutive transmembrane segments (helical) span residues 34–54 (FGSL…LLAM), 78–99 (WLIR…YFHI), 114–134 (WNTG…GYVL), and 179–199 (FFAL…IHLT). Heme b contacts are provided by His-84 and His-98. Residues His-183 and His-197 each contribute to the heme b site. Residue His-202 coordinates a ubiquinone. 4 helical membrane passes run 227–247 (LKDI…ALFS), 289–309 (LGGV…PFLH), 321–341 (ISQL…WVGS), and 348–368 (FIII…VLFP).

It belongs to the cytochrome b family. The cytochrome bc1 complex contains 11 subunits: 3 respiratory subunits (MT-CYB, CYC1 and UQCRFS1), 2 core proteins (UQCRC1 and UQCRC2) and 6 low-molecular weight proteins (UQCRH/QCR6, UQCRB/QCR7, UQCRQ/QCR8, UQCR10/QCR9, UQCR11/QCR10 and a cleavage product of UQCRFS1). This cytochrome bc1 complex then forms a dimer. The cofactor is heme b.

The protein resides in the mitochondrion inner membrane. Functionally, component of the ubiquinol-cytochrome c reductase complex (complex III or cytochrome b-c1 complex) that is part of the mitochondrial respiratory chain. The b-c1 complex mediates electron transfer from ubiquinol to cytochrome c. Contributes to the generation of a proton gradient across the mitochondrial membrane that is then used for ATP synthesis. The polypeptide is Cytochrome b (MT-CYB) (Pachyptila salvini (Salvin's prion)).